The sequence spans 337 residues: Autophagy-related protein 14 (337 aa).

The cysteine repeats stretch occupies residues 5–20 (CSVCRNHVQSMYCAHC). Residues 87–153 (KRNNRVRYRI…NEVVKREQEL (67 aa)) adopt a coiled-coil conformation.

This sequence belongs to the ATG14 family.

It localises to the preautophagosomal structure membrane. It is found in the vacuole membrane. In terms of biological role, required for cytoplasm to vacuole transport (Cvt) and autophagy as a part of the autophagy-specific VPS34 PI3-kinase complex I. This complex is essential to recruit the ATG8-phosphatidylinositol conjugate and the ATG12-ATG5 conjugate to the pre-autophagosomal structure. ATG14 mediates the specific binding of the VPS34 PI3-kinase complex I to the preautophagosomal structure (PAS). The protein is Autophagy-related protein 14 (ATG14) of Vanderwaltozyma polyspora (strain ATCC 22028 / DSM 70294 / BCRC 21397 / CBS 2163 / NBRC 10782 / NRRL Y-8283 / UCD 57-17) (Kluyveromyces polysporus).